Consider the following 401-residue polypeptide: NADH-quinone oxidoreductase subunit D (401 aa).

Belongs to the complex I 49 kDa subunit family. NDH-1 is composed of 15 different subunits. Subunits NuoB, C, D, E, F, and G constitute the peripheral sector of the complex.

The protein localises to the cell membrane. It catalyses the reaction a quinone + NADH + 5 H(+)(in) = a quinol + NAD(+) + 4 H(+)(out). Functionally, NDH-1 shuttles electrons from NADH, via FMN and iron-sulfur (Fe-S) centers, to quinones in the respiratory chain. The immediate electron acceptor for the enzyme in this species is believed to be a menaquinone. Couples the redox reaction to proton translocation (for every two electrons transferred, four hydrogen ions are translocated across the cytoplasmic membrane), and thus conserves the redox energy in a proton gradient. The protein is NADH-quinone oxidoreductase subunit D of Deinococcus radiodurans (strain ATCC 13939 / DSM 20539 / JCM 16871 / CCUG 27074 / LMG 4051 / NBRC 15346 / NCIMB 9279 / VKM B-1422 / R1).